The chain runs to 473 residues: MVNLVIVSHSAMLGEGVEMLARQMLTGDNCRIAVAAGIDDPDHPIGTDPIKVMEAIEAVADTDHVLVMMDMGSALLSAETALDLLDPVIAEKVRLCAAPLVEGTLAATVSAAAGADIDTVIDVAMNALAAKQAQLGITPPAHAASLPAQAPDSDARSVTVTIRNHHGLHVRPASRLVAALAGMNADLVLEKQGQCVKPDSLNQIALLQVRCHDAVTLSASGPDAERALAAFESLAAEDFGEHPESMALKTSASTVEKVQGKAVFYPLPLAQPARHPCSDVGQEERRLQQAIVDTLNDLNALAALAEKKYGASVAAIFSGHYTLLDDPDLFDAACKVIRNDSCCAESAWYQVLMELSQQYQHLDDAYLQARFIDIEDILYRSLCHLKGRDIRLPTPDVPAIIVADDIFPSAVVNLNAQLVKGICLREGSTLSHAAIIAQQAGIAFICQQGAVLDIIQPEDRLLIDPAAQRVSCA.

The PTS EIIA type-4 domain maps to 1 to 137 (MVNLVIVSHS…LAAKQAQLGI (137 aa)). Catalysis depends on histidine 9, which acts as the Tele-phosphohistidine intermediate. Residues 155-242 (ARSVTVTIRN…SLAAEDFGEH (88 aa)) form the HPr domain. The Pros-phosphohistidine intermediate role is filled by histidine 169. Positions 266–472 (PLPLAQPARH…IDPAAQRVSC (207 aa)) are PTS EI-like, N-terminal part. Residue histidine 432 is the Tele-phosphohistidine intermediate of the active site.

This sequence belongs to the PEP-utilizing enzyme family. Homodimer. The dihydroxyacetone kinase complex is composed of a homodimer of DhaM, a homodimer of DhaK and the subunit DhaL.

It catalyses the reaction dihydroxyacetone + phosphoenolpyruvate = dihydroxyacetone phosphate + pyruvate. Component of the dihydroxyacetone kinase complex, which is responsible for the phosphoenolpyruvate (PEP)-dependent phosphorylation of dihydroxyacetone. DhaM serves as the phosphoryl donor. Is phosphorylated by phosphoenolpyruvate in an EI- and HPr-dependent reaction, and a phosphorelay system on histidine residues finally leads to phosphoryl transfer to DhaL and dihydroxyacetone. In Pantoea ananatis (strain LMG 20103), this protein is PEP-dependent dihydroxyacetone kinase, phosphoryl donor subunit DhaM.